The chain runs to 120 residues: Phosphoribosyl-AMP cyclohydrolase (120 aa).

Aspartate 75 lines the Mg(2+) pocket. Cysteine 76 lines the Zn(2+) pocket. Positions 77 and 79 each coordinate Mg(2+). Residues cysteine 92 and cysteine 99 each contribute to the Zn(2+) site.

It belongs to the PRA-CH family. Homodimer. Mg(2+) serves as cofactor. Requires Zn(2+) as cofactor.

It is found in the cytoplasm. It catalyses the reaction 1-(5-phospho-beta-D-ribosyl)-5'-AMP + H2O = 1-(5-phospho-beta-D-ribosyl)-5-[(5-phospho-beta-D-ribosylamino)methylideneamino]imidazole-4-carboxamide. The protein operates within amino-acid biosynthesis; L-histidine biosynthesis; L-histidine from 5-phospho-alpha-D-ribose 1-diphosphate: step 3/9. Its function is as follows. Catalyzes the hydrolysis of the adenine ring of phosphoribosyl-AMP. In Methanosarcina acetivorans (strain ATCC 35395 / DSM 2834 / JCM 12185 / C2A), this protein is Phosphoribosyl-AMP cyclohydrolase.